A 203-amino-acid polypeptide reads, in one-letter code: Histidine biosynthesis bifunctional protein HisIE (203 aa).

Positions 1–108 (MELDFDKMNG…GEKNEEPVMF (108 aa)) are phosphoribosyl-AMP cyclohydrolase. Residues 109–203 (LKALQDFIDK…ERHSSTWKKH (95 aa)) are phosphoribosyl-ATP pyrophosphohydrolase.

The protein in the N-terminal section; belongs to the PRA-CH family. In the C-terminal section; belongs to the PRA-PH family.

It localises to the cytoplasm. The enzyme catalyses 1-(5-phospho-beta-D-ribosyl)-ATP + H2O = 1-(5-phospho-beta-D-ribosyl)-5'-AMP + diphosphate + H(+). It carries out the reaction 1-(5-phospho-beta-D-ribosyl)-5'-AMP + H2O = 1-(5-phospho-beta-D-ribosyl)-5-[(5-phospho-beta-D-ribosylamino)methylideneamino]imidazole-4-carboxamide. Its pathway is amino-acid biosynthesis; L-histidine biosynthesis; L-histidine from 5-phospho-alpha-D-ribose 1-diphosphate: step 2/9. It functions in the pathway amino-acid biosynthesis; L-histidine biosynthesis; L-histidine from 5-phospho-alpha-D-ribose 1-diphosphate: step 3/9. This is Histidine biosynthesis bifunctional protein HisIE from Bacteroides thetaiotaomicron (strain ATCC 29148 / DSM 2079 / JCM 5827 / CCUG 10774 / NCTC 10582 / VPI-5482 / E50).